Here is a 145-residue protein sequence, read N- to C-terminus: Large-conductance mechanosensitive channel (145 aa).

The next 2 helical transmembrane spans lie at 16–36 (VVDL…VTSF) and 83–103 (GVFI…FMVI).

It belongs to the MscL family. In terms of assembly, homopentamer.

Its subcellular location is the cell inner membrane. Channel that opens in response to stretch forces in the membrane lipid bilayer. May participate in the regulation of osmotic pressure changes within the cell. The sequence is that of Large-conductance mechanosensitive channel from Geobacter metallireducens (strain ATCC 53774 / DSM 7210 / GS-15).